A 328-amino-acid polypeptide reads, in one-letter code: Gonadotropin-releasing hormone receptor (328 aa).

Over 1–38 (MANSASPEQNQNHCSASNSSIPLTQANLPTLTLSGKIR) the chain is Extracellular. A glycan (N-linked (GlcNAc...) asparagine) is linked at Asn-18. A helical membrane pass occupies residues 39-59 (VTVTFFLFLLSTTFNASFLLK). The Cytoplasmic portion of the chain corresponds to 60–84 (LHKWTQKKENGKKLSKMKVLLKHLT). A helical transmembrane segment spans residues 85-105 (LANLLETLIVMPLDGMWNITV). At 106-115 (QWYAGELLCK) the chain is on the extracellular side. A disulfide bond links Cys-114 and Cys-196. The chain crosses the membrane as a helical span at residues 116–136 (VLSYLKLFSMYAPAFMMVVIS). At 137-157 (LDRSLAITRPLAVKSNSKLGR) the chain is on the cytoplasmic side. Residues 158–178 (SMIGLAWLLSSIFAGPQLYIF) form a helical membrane-spanning segment. The Extracellular segment spans residues 179–208 (RMIHLADSSGQTEGFSQCVTHCSFPQWWHQ). A helical membrane pass occupies residues 209–229 (AFYNFFTFSCLFIIPLLFMLI). Residues 230–271 (CNAKIIFTLTRVLHQDPHKLQLNQSKNNIPRARLRTLKMTVA) lie on the Cytoplasmic side of the membrane. Residues 272–292 (FATSFTVCWTPYYVLGIWYWF) form a helical membrane-spanning segment. The Extracellular segment spans residues 293–306 (DPEMLNRVSDPVNH). A helical membrane pass occupies residues 307 to 327 (FFFLFALLNPCFDPLIYGYFS). Residue Leu-328 is a topological domain, cytoplasmic.

The protein belongs to the G-protein coupled receptor 1 family.

Its subcellular location is the cell membrane. Its function is as follows. Receptor for gonadotropin releasing hormone (GnRH) that mediates the action of GnRH to stimulate the secretion of the gonadotropic hormones luteinizing hormone (LH) and follicle-stimulating hormone (FSH). This receptor mediates its action by association with G-proteins that activate a phosphatidylinositol-calcium second messenger system. The protein is Gonadotropin-releasing hormone receptor (GNRHR) of Equus caballus (Horse).